Consider the following 221-residue polypeptide: MAKQNLELKATSFTLSVLHINHNDLDIIAAELDNKLAQAPQFFLGAPLVLNLSAIQHTHIDFNALKQLLIDRNLIIVGITDASAEQIEQAKSMAIAVVKSGKQARKAELPERATKIVKQNVRSGQQIYAQNADLIIFGAVGNGAEVIADGSIHIYGALRGKAMAGAAGDNQSVIIANSLEAELVSIAGQYWLTEHLQQYDLSQRGCVRLEGASLTVESLPQ.

This sequence belongs to the MinC family. In terms of assembly, interacts with MinD and FtsZ.

Cell division inhibitor that blocks the formation of polar Z ring septums. Rapidly oscillates between the poles of the cell to destabilize FtsZ filaments that have formed before they mature into polar Z rings. Prevents FtsZ polymerization. The sequence is that of Probable septum site-determining protein MinC from Shewanella frigidimarina (strain NCIMB 400).